We begin with the raw amino-acid sequence, 779 residues long: MENNKRGVVEAKGIKSHYFQTLANYVSNNLELLHNNPKQANSFAASVFGSTAPIDEKDLLDLLVPSDANADALAAGMDCCLLLGEKYRPHFDAAVQQLARLGRTHDVATVIDDEKKFTALSKKTKLKKTDEAKILQAFFKIHSTEDEEKFEAISELCQLDLDFDAYVFIKALTLENEENQELVETIKDNLVEAWNKSNPLLVKLLLEGVKEQDPVDKFTYLLLQPLTEATLSDAVNFIVEKYSAELPDEGDASLVVRSQLGCQFFFLVTRTLAHDQRELAKLVQTLIPRPVRLEVFPGLQRSVFKSSVFLGHHIIQIFMGCEFCSIQSIKNTMFSAKKPFQDWSFVGLAQDFECPWRRLAIAELLKKFSVSVVEKVFDNPVALIPQHESDNEALIELVTNALRFALWIVEFYETETNEKSIKELAFLDHSSKTLLIESFTKFLQGKDVKDQDHLKRIIDALEKSRTQETKSNLEYSREEIKTKMPSSSSAKAQVLHGLNTSAAAGLIVPSLSLLEIPVDEVDSTSHLTTSKDIGQGVFVKAQDTVTEKQKEAPLVAQQTAFHHEPQTATLVPPSPNEESMAAESISTDGWDSPTKSVVLPLDDMILEEEERDALKPDSVNSHRSEETTPVPEQLPQETSERVTSPPPGERSRTAWGDGDATPMILATPTNDYKVSGFGGAKLAKGFGTMGSTGGGFGGGGGGGSYGGRGGYGGGDRGGRGGGFGGGDRGGRGGYGGGDRGGRGGGYGGGDRGGYGQRGGYVAGGDRGGRGGYRGGGGNF.

The involved in dimerization stretch occupies residues 203–464; it reads KLLLEGVKEQ…KRIIDALEKS (262 aa). The active-site Proton acceptor is the histidine 453. 3 disordered regions span residues 563–596, 611–661, and 718–779; these read HEPQ…PTKS, RDAL…GDAT, and GRGG…GGNF. Residues 584–595 are compositionally biased toward polar residues; sequence SISTDGWDSPTK. The span at 612 to 626 shows a compositional bias: basic and acidic residues; sequence DALKPDSVNSHRSEE. An RNA-binding RGG-box region spans residues 699-772; the sequence is GGGGGSYGGR…GGDRGGRGGY (74 aa).

Homodimer. Interacts with pgl-2 and pgl-3; this association is not required for P-granule localization of either pgl-2 or pgl-3. Interacts with ife-1. Interacts with prmt-1; the interaction is direct. Interacts with nmad-1. Interacts with P granule components meg-1, meg-3 and meg-4. Requires Does not require metal ions for catalytic activity. as cofactor.

It localises to the cytoplasmic granule. It carries out the reaction [RNA] containing guanosine + H2O = an [RNA fragment]-3'-guanosine-3'-phosphate + a 5'-hydroxy-ribonucleotide-3'-[RNA fragment].. In terms of biological role, guanyl-specific endoribonuclease which cleaves the phosphodiester bond in single-stranded RNA between the 3'-guanylic residue and the 5'-OH residue of adjacent nucleotide, resulting in the formation of a corresponding 2',3'-cyclic phosphate intermediate. Essential role in male and female postembryonic germline development; maternally provided protein maintains a population of proliferating germ cells and zygotic expression is required for correct oogenesis. Together with the P-granule component pgl-3, is involved in the formation of P-granules. Together with pgl-3, probably recruits other granule components such as pos-1, mex-3 and glh-1 to P-granules. In addition, may act redundantly with pgl-3 to protect germ cells from excessive germline apoptosis during normal oogenesis and development of the two gonadal arms. This may in part be through regulating the localization of sir-2.1 which is involved in germ cell apoptosis. May protect somatic cells from excessive apoptosis during normal development. This chain is Guanyl-specific ribonuclease pgl-1, found in Caenorhabditis remanei (Caenorhabditis vulgaris).